A 425-amino-acid polypeptide reads, in one-letter code: MAKQIQAIRGMNDCLPEQTPVWQMVEATLRRVVSSYGYSEIRMPVVEMTNLFQRAIGEVTDVVEKEMYTFNDRNGDSLTLRPEGTAGCVRACIEHGLVYNQERRLWYVGPMFRHERPQKGRYRQFHQFGVEVFGLTGPDIDAELIMMTARLWRELGIAQFTTLQLNTLGSSAERAAYRDALVTFLEQHKESLDEESQRRMYSNPLRVLDTKNPQVQEILQHAPTMADYFGEETKAHFSGLKALLDAAGIAYQVNERLVRGLDYYNYTVFEWVTDSLGAQGTICGGGRYDGLVEQLGGQATPAIGFAMGLERLTLMLETLEQIRNIPSTVDVYICMAGEGTLTAGLLLAEKLRSERPQLRVMTHCGGGNFKKQMKRADKVEARIALILGETEVAEQKVTVKFLRDQVEQQTVDVTALLPILAQLGE.

Belongs to the class-II aminoacyl-tRNA synthetase family. As to quaternary structure, homodimer.

Its subcellular location is the cytoplasm. The catalysed reaction is tRNA(His) + L-histidine + ATP = L-histidyl-tRNA(His) + AMP + diphosphate + H(+). The sequence is that of Histidine--tRNA ligase from Tolumonas auensis (strain DSM 9187 / NBRC 110442 / TA 4).